The chain runs to 1024 residues: Zn(2)-C6 fungal-type transcription factor FTF1a (1024 aa).

Residues 137–164 (CIACRRKKVRCSGEKPACKHCLHSHIPC) constitute a DNA-binding region (zn(2)-C6 fungal-type).

It localises to the nucleus. In terms of biological role, zn(2)-C6 fungal-type transcription factor that has a role in the establishment of the fungus within the plant and/or the progress of the disease. Regulates the expression of virulence factors such as SIX1 and SIX6. This chain is Zn(2)-C6 fungal-type transcription factor FTF1a, found in Fusarium oxysporum f. sp. lycopersici (strain 4287 / CBS 123668 / FGSC 9935 / NRRL 34936) (Fusarium vascular wilt of tomato).